A 208-amino-acid chain; its full sequence is Uracil phosphoribosyltransferase (208 aa).

Residues Arg-78, Arg-103, and 130 to 138 (DPMLATGGS) contribute to the 5-phospho-alpha-D-ribose 1-diphosphate site. Uracil contacts are provided by residues Ile-193 and 198–200 (GDA). Position 199 (Asp-199) interacts with 5-phospho-alpha-D-ribose 1-diphosphate.

The protein belongs to the UPRTase family. Mg(2+) serves as cofactor.

The enzyme catalyses UMP + diphosphate = 5-phospho-alpha-D-ribose 1-diphosphate + uracil. Its pathway is pyrimidine metabolism; UMP biosynthesis via salvage pathway; UMP from uracil: step 1/1. Its activity is regulated as follows. Allosterically activated by GTP. Its function is as follows. Catalyzes the conversion of uracil and 5-phospho-alpha-D-ribose 1-diphosphate (PRPP) to UMP and diphosphate. The protein is Uracil phosphoribosyltransferase of Pectobacterium carotovorum subsp. carotovorum (strain PC1).